We begin with the raw amino-acid sequence, 378 residues long: Erythronate-4-phosphate dehydrogenase (378 aa).

Substrate-binding residues include S45 and T66. Positions 146 and 175 each coordinate NAD(+). R208 is an active-site residue. D232 serves as a coordination point for NAD(+). The active site involves E237. Catalysis depends on H254, which acts as the Proton donor. G257 lines the NAD(+) pocket. Position 258 (Y258) interacts with substrate.

Belongs to the D-isomer specific 2-hydroxyacid dehydrogenase family. PdxB subfamily. In terms of assembly, homodimer.

It localises to the cytoplasm. The enzyme catalyses 4-phospho-D-erythronate + NAD(+) = (R)-3-hydroxy-2-oxo-4-phosphooxybutanoate + NADH + H(+). It participates in cofactor biosynthesis; pyridoxine 5'-phosphate biosynthesis; pyridoxine 5'-phosphate from D-erythrose 4-phosphate: step 2/5. Catalyzes the oxidation of erythronate-4-phosphate to 3-hydroxy-2-oxo-4-phosphonooxybutanoate. The polypeptide is Erythronate-4-phosphate dehydrogenase (Escherichia coli O81 (strain ED1a)).